The chain runs to 61 residues: Bowman-Birk type proteinase inhibitor B5 (61 aa).

Disulfide bonds link cysteine 5–cysteine 60, cysteine 6–cysteine 22, cysteine 9–cysteine 56, cysteine 12–cysteine 20, cysteine 29–cysteine 36, and cysteine 33–cysteine 48.

It belongs to the Bowman-Birk serine protease inhibitor family. As to expression, expressed in bulb (at protein level).

Functionally, serine protease inhibitor. Inhibits trypsin (Ki = 41 nM) and weakly inhibits chymotrypsin (Ki = 410 nM). Does not inhibit bacterial subtilisin. This is Bowman-Birk type proteinase inhibitor B5 from Hyacinthus orientalis (Common hyacinth).